A 329-amino-acid polypeptide reads, in one-letter code: Phenylalanine--tRNA ligase alpha subunit (329 aa).

Residue E254 coordinates Mg(2+).

It belongs to the class-II aminoacyl-tRNA synthetase family. Phe-tRNA synthetase alpha subunit type 1 subfamily. As to quaternary structure, tetramer of two alpha and two beta subunits. Mg(2+) is required as a cofactor.

It is found in the cytoplasm. The catalysed reaction is tRNA(Phe) + L-phenylalanine + ATP = L-phenylalanyl-tRNA(Phe) + AMP + diphosphate + H(+). The polypeptide is Phenylalanine--tRNA ligase alpha subunit (Mannheimia succiniciproducens (strain KCTC 0769BP / MBEL55E)).